The sequence spans 344 residues: Methionine import ATP-binding protein MetN (344 aa).

An ABC transporter domain is found at 2 to 241 (IKLEKISKIF…PQTQLAKEFI (240 aa)). 38 to 45 (GASGAGKS) is a binding site for ATP.

Belongs to the ABC transporter superfamily. Methionine importer (TC 3.A.1.24) family. The complex is composed of two ATP-binding proteins (MetN), two transmembrane proteins (MetI) and a solute-binding protein (MetQ).

The protein resides in the cell inner membrane. The catalysed reaction is L-methionine(out) + ATP + H2O = L-methionine(in) + ADP + phosphate + H(+). It catalyses the reaction D-methionine(out) + ATP + H2O = D-methionine(in) + ADP + phosphate + H(+). Functionally, part of the ABC transporter complex MetNIQ involved in methionine import. Responsible for energy coupling to the transport system. In Pasteurella multocida (strain Pm70), this protein is Methionine import ATP-binding protein MetN.